A 1291-amino-acid chain; its full sequence is Tat-binding homolog 7 (1291 aa).

Residues methionine 1–arginine 345 form a disordered region. Over residues arginine 64–arginine 82 the composition is skewed to basic and acidic residues. The span at serine 88–methionine 99 shows a compositional bias: polar residues. Positions glutamate 226–glutamate 257 are enriched in acidic residues. Over residues asparagine 298–arginine 311 the composition is skewed to basic residues. Glycine 432–threonine 439 contacts ATP. Residues alanine 914 to glutamate 1022 form the Bromo domain. The tract at residues lysine 1110–proline 1194 is disordered. Positions asparagine 1128–serine 1142 are enriched in basic residues. Positions glutamate 1148 to isoleucine 1164 are enriched in acidic residues. The span at leucine 1168–lysine 1190 shows a compositional bias: basic and acidic residues.

The protein belongs to the AAA ATPase family.

In terms of biological role, thought to form a complex that enhances transcription from repetitive DNA sequences by modulating chromatin structure. The chain is Tat-binding homolog 7 (lex-1) from Caenorhabditis elegans.